The primary structure comprises 503 residues: Glutamate--tRNA ligase (503 aa).

A 'HIGH' region motif is present at residues 15 to 25 (PSPTGYLHVGG). The 'KMSKS' region signature appears at 262–266 (KLSKR). Residue lysine 265 coordinates ATP.

It belongs to the class-I aminoacyl-tRNA synthetase family. Glutamate--tRNA ligase type 1 subfamily. In terms of assembly, monomer.

The protein localises to the cytoplasm. It catalyses the reaction tRNA(Glu) + L-glutamate + ATP = L-glutamyl-tRNA(Glu) + AMP + diphosphate. In terms of biological role, catalyzes the attachment of glutamate to tRNA(Glu) in a two-step reaction: glutamate is first activated by ATP to form Glu-AMP and then transferred to the acceptor end of tRNA(Glu). The protein is Glutamate--tRNA ligase of Prosthecochloris aestuarii (strain DSM 271 / SK 413).